The following is a 3563-amino-acid chain: MSISVPEKLQDLTAVKSPSAFGNSIESINGDKNKSERHTASSSAVSTYEIGHPCLLTNFKLAVACSGPAITKVATVNDKDSGAKLKNVINGKDISASEVFKGAWAVVLGTYLAKSHVSLDYGVMKPKGLGPETSCNARVPSENSEMSTSSFLLRANDTLLDIIRQNSMCAHTELRQKSSLDDVESPKRCNTCVIYWPEISCSEQLQIDAWMTILEENDQLTQYDCMIHFASDMRCMLSYRDQFMSESQARHLAATMRVVLSSIASAPQQSLADVDVCSSLDYRTLSRWNFKAPIVSEVCVHDLIEKSCSPRPNPQAVVSWDGCLTYNEMDRLSSHLAQRLRDAGVEPGVFVALCLDRCKWAVIGIVAVMKAGGAFCALDPSYPVSRLKEMCRDLGITIVLTVKSNIQHASPLASKVFALDDDVYFESALSSAHESASWVNVSPHDPVYAVFTSGSTGKPKGIIMEHASFSACALSSVKPLQIADQDRVLHFASYAFDASVIEILAPLIAGATVAIPSERARLEDLPRAMTDLKATWAFLTPTVARLYRPEQMPTLKTLCLGGEAVNASDTRSWSSKNLISGYNPAECCPLGISGPLNDRMPRSLGSTFASQTAWIVDPKDHEKLLPAGAIGELAIEGPVVARGYIHDVTCSDPSTPFVVKPPPWLRRFRATANRGNRIYLTGDLARLDCDDGSVHYLGRKDDQVKIHGQRVELAEIEHHLEQHFVSLATKVVVMLLRPISGRTVLAALIMPHQRLQHGDKSLESLLMEPGDVSQDFRANLASAASKLRLALPSHMVPSVYLPIRHFPTTKGGKIDRGHLQSLLLSLPPECLYGSEEATTRRGEEPKSDREKLLQALFAQSLDLPRTRIDLDSNFFQLGGDSLSAMKLLALALEEGISSIAYQDIFSHPTLREIVIVSTSATSREPLSSETVETPPFSLIKDPEMLIQIASEQCGSGVGKADIEDIYPCTHLQQSLMASTAHNPNAYVAILAFKLKSGVDRTRLERAWHIACSGHTILRTRLVQTDTGDCYQVVVKQPPHWTETNEVSDDGSTDSLLRTSFGLGRPLIQSHLSTDQLFVAMHHALYDGWSLPMLIGELDLAYRELSVRRLPCLKNYVKYTMDSADAAASFWQAELQDADPVHFPAPSSLDYKPQPCAAMTVSVPLVNSPRRNVTLATEIQFAWAMTVYTYTGCKDVIFGLISSGRAAPVAQIESMLGPTFASTPLRVSIDPQGKLGEALDDLQYTIVEQSMFVHFGAQAIRQLGPNAAAACNFQTVLAVETAGPDTGVEEGSWFTGYDFLSDLASFSSHALTLRCKLSAKGVEINAVYDKAVVDERQMGRILAQFEHILTEIHSNETIHDDIGSLDKLSRSDWRELQAWNSDLPPPHPKGLGAHQVIQEKCQAQPDATAIDAWDGSVTYDELERRAEKLAGLVRSYVSKPDQVVVLYFSKSRLTVVTQLAILKAGAAFITLDITQPPHHLRRIIAALGPALILVLTSDELLSAAEELQEGAAVMAVDKDHLSNGIIASQTSSSACAVECELMYVVATSGTTGVPKIIMTNHQSFMTNASPLMNRMGITAESRVFQFCGYSFDLMIAEHFLTLLAGGCICIPSLHNRNNRFAASIVEFKANWIGAPSSVLQLLDPQTVPTVKTIMQGGERLQQGLVDRWAPSARLINAYGPAECSVAALVSDTVRPDTENVQNLGFATGSVCWIVNADTEGKLLPVPIGAEGELLIEGHTLSRGYLGDLDKTNAVFLALPDWLRDFRADCNQGQGHRAYLTGDIVRQNSDGSISFVRRKDAQVKIRGQRVELADVEHQVERCFAGSHQVVTDIVQISDSQSSILVALVLTKDVMTNYKQQESLLDQKSAGGLSILAPTSSFTANANAAETALQDRIPAYMVPDLFVPVSDFPREASGKVGRRTIKQYLASLTQQDWSRYSLTRKVPPSNATEHEILAIWARVLRIEPHTFGVHDSFFRLGGDSISSMRVAAACGVAGISVTVKDMFEYRTIRKLALARGVTQQMDVATTSTEANASVVSQKKAPHIFYPEGRLEIYMERMQSRLGQAIERIYPCSPIQQGILMSHARNAHHYDEVIQWRVAGDVWCDISRMQRAWREVVSRHGILRTLFLQVSEDSFLDQVVLKNYSPHISVYTDGEDWEAYRPFEDSVPMHQLLVIQRSADDVTVSLRIHHALVDGLSLHIIRRDLEHAYQGCLDDLVEPPAYHEYISYLQEKRLQESPKEYWKSYLQGATGALFPAVQDEPAEDGQYFGVVEIELGPSAKLTQFCEEHKLGMTVVLHVVWAIIVQRYTATDEVCFGFMTSGRHVPVANVENMVGPLFNMLIGRVKLAYNLSLLSTMYEYQENFINSLDHQQQSLVESLHSIGSSAGDLFNTLITVFNDQPEGHASQQQSTLRLVGDIVQSRSEYPITLNIVSCADKIKMQLSYHAILLNSVSANAIAEAFRFVLQRTLERPHELLRALPVLDEDQMNSVFEKNSSVPPQVEELIHDTIHQQCIRCPDSPSVCAWDGNFTYRQLDELSSALSREIVRKGAGPEVTIPIVLEKTRWTPVAMLAVLKSGSSFVLMDSTHPAVRVGSIVQAIGPPVIIVSAQTRSKVATFSTDVVEVGDWLAREILVAKQHVTRQNGLLQATNAAYLVFTSGSTGKPKGAIVEHASLSTAAKYMASRLHIDSASRVLQFSSHAWDIPVTEVLVTLRMGGCVCVPSEEERTGNLAKASERMKVNWALWTPTVARLFKPEEFPHLKTLVFAGEALSATDLETWCDRVRLVQGYGPAECSLISTVTDPLTRSDNPRCIGLPSGCVAWVVNRDNHELLAPPGATGELVLEGPIVGRGYLGDPGRAASAFISPPAWLMRLRGSGSSNRLYKTGDLVRQHVSSGLLTFVGRNDDQVKVRGQRVEPGEVEGQVAQVFPGSQVIVLVVKKSAGAVLAALVLQNGEDRSSAGETANLFPPPSLAFAALAKAAFSKLREDHAYAATGKADRNLLRDRVASLSAEEDRGICGGPVCRPGPPRTALEAELPRLVGQVLPKASSFPFPLDEDPIPDLGMDSPPGPDPLASSCAPTWVGGFRSNHFPALATVRFGSYRRAGAARNQFTESARRSSCYINKRLVSLLPEICTKWDLREDQITHIAPTTYYQHMALASDHEAFFGLYFSKPMASEALKAAASRVVNLHSILRTAFVPLEDTYVQLTLCDFDLPSQEIQTNEAEVSAAMELFCRDAADKTAGFGVPVTKLILMLDRQGDCLSLLLRLQRAQFDGVSVMRIMADWRSALEHASCSWEPAPSLDYADFALARVAQNTPDVFGMWRDQEYISMTDRGHAERLVTSSCDIPLPEPAPGYTMATVAKAAWAICLARETESEDLLFLQLVRNRHLALDGIDKMVGCSLNYVPVRVPLRRDWKISDLLHWLHQQHIRTMAGDTADWPDVVAKSTTWSSDTEFGSVIHYLSAPAAPVYHFPGDTVAQFQLYDEKMTHTCPLVTCIEFPGPTEQSGRQMKILVTSAVGGQDMVDRLLAVFRSLLCEANAQLDQSVSNILQGLRDGDDAMGKAR.

An adenylation (A) domain 1 region spans residues 307-706 (SCSPRPNPQA…LGRKDDQVKI (400 aa)). The Carrier 1 domain occupies 844 to 921 (EPKSDREKLL…EIVIVSTSAT (78 aa)). S881 is subject to O-(pantetheine 4'-phosphoryl)serine. The segment at 963–1354 (EDIYPCTHLQ…EHILTEIHSN (392 aa)) is condensation (C) domain 1. The segment at 1397-1804 (QEKCQAQPDA…RRKDAQVKIR (408 aa)) is adenylation (A) domain 2. The region spanning 1944–2020 (PPSNATEHEI…KLALARGVTQ (77 aa)) is the Carrier 2 domain. An O-(pantetheine 4'-phosphoryl)serine modification is found at S1981. Residues 2067 to 2486 (ERIYPCSPIQ…ALPVLDEDQM (420 aa)) form a condensation (C) domain 2 region. Residues 2511-2909 (QCIRCPDSPS…GRNDDQVKVR (399 aa)) are adenylation (A) domain 3. In terms of domain architecture, Carrier 3 spans 3025–3104 (PPRTALEAEL…RFGSYRRAGA (80 aa)). Position 3064 is an O-(pantetheine 4'-phosphoryl)serine (S3064). Positions 3166–3451 (LYFSKPMASE…VAKSTTWSSD (286 aa)) are cyclization (Cyc) domain.

This sequence belongs to the NRP synthetase family.

The protein operates within alkaloid biosynthesis; ergot alkaloid biosynthesis. D-lysergyl-peptide-synthetase subunit 1; part of the gene cluster that mediates the biosynthesis of fungal ergot alkaloid. DmaW catalyzes the first step of ergot alkaloid biosynthesis by condensing dimethylallyl diphosphate (DMAP) and tryptophan to form 4-dimethylallyl-L-tryptophan. The second step is catalyzed by the methyltransferase easF that methylates 4-dimethylallyl-L-tryptophan in the presence of S-adenosyl-L-methionine, resulting in the formation of 4-dimethylallyl-L-abrine. The catalase easC and the FAD-dependent oxidoreductase easE then transform 4-dimethylallyl-L-abrine to chanoclavine-I which is further oxidized by easD in the presence of NAD(+), resulting in the formation of chanoclavine-I aldehyde. Agroclavine dehydrogenase easG then mediates the conversion of chanoclavine-I aldehyde to agroclavine via a non-enzymatic adduct reaction: the substrate is an iminium intermediate that is formed spontaneously from chanoclavine-I aldehyde in the presence of glutathione. The presence of easA is not required to complete this reaction. Further conversion of agroclavine to paspalic acid is a two-step process involving oxidation of agroclavine to elymoclavine and of elymoclavine to paspalic acid, the second step being performed by the elymoclavine oxidase cloA. Paspalic acid is then further converted to D-lysergic acid. Ergopeptines are assembled from D-lysergic acid and three different amino acids by the D-lysergyl-peptide-synthetases composed each of a monomudular and a trimodular nonribosomal peptide synthetase subunit. LpsB and lpsC encode the monomodular subunits responsible for D-lysergic acid activation and incorporation into the ergopeptine backbone. LpsA1 and A2 subunits encode the trimodular nonribosomal peptide synthetase assembling the tripeptide portion of ergopeptines. LpsA1 is responsible for formation of the major ergopeptine, ergotamine, and lpsA2 for alpha-ergocryptine, the minor ergopeptine of the total alkaloid mixture elaborated by C.purpurea. D-lysergyl-tripeptides are assembled by the nonribosomal peptide synthetases and released as N-(D-lysergyl-aminoacyl)-lactams. Cyclolization of the D-lysergyl-tripeptides is performed by the Fe(2+)/2-ketoglutarate-dependent dioxygenase easH which introduces a hydroxyl group into N-(D-lysergyl-aminoacyl)-lactam at alpha-C of the aminoacyl residue followed by spontaneous condensation with the terminal lactam carbonyl group. This chain is D-lysergyl-peptide-synthetase subunit 1, found in Claviceps purpurea (Ergot fungus).